Consider the following 311-residue polypeptide: Aspartate carbamoyltransferase catalytic subunit (311 aa).

R55 and T56 together coordinate carbamoyl phosphate. Residue K85 participates in L-aspartate binding. Carbamoyl phosphate contacts are provided by R106, H135, and Q138. Residues R168 and R230 each coordinate L-aspartate. Carbamoyl phosphate is bound by residues L268 and P269.

The protein belongs to the aspartate/ornithine carbamoyltransferase superfamily. ATCase family. Heterododecamer (2C3:3R2) of six catalytic PyrB chains organized as two trimers (C3), and six regulatory PyrI chains organized as three dimers (R2).

It catalyses the reaction carbamoyl phosphate + L-aspartate = N-carbamoyl-L-aspartate + phosphate + H(+). Its pathway is pyrimidine metabolism; UMP biosynthesis via de novo pathway; (S)-dihydroorotate from bicarbonate: step 2/3. Its function is as follows. Catalyzes the condensation of carbamoyl phosphate and aspartate to form carbamoyl aspartate and inorganic phosphate, the committed step in the de novo pyrimidine nucleotide biosynthesis pathway. This Escherichia fergusonii (strain ATCC 35469 / DSM 13698 / CCUG 18766 / IAM 14443 / JCM 21226 / LMG 7866 / NBRC 102419 / NCTC 12128 / CDC 0568-73) protein is Aspartate carbamoyltransferase catalytic subunit.